Reading from the N-terminus, the 79-residue chain is Small ribosomal subunit protein bS18 (79 aa).

The protein belongs to the bacterial ribosomal protein bS18 family. As to quaternary structure, part of the 30S ribosomal subunit. Forms a tight heterodimer with protein bS6.

Binds as a heterodimer with protein bS6 to the central domain of the 16S rRNA, where it helps stabilize the platform of the 30S subunit. The protein is Small ribosomal subunit protein bS18 of Nitrobacter hamburgensis (strain DSM 10229 / NCIMB 13809 / X14).